A 361-amino-acid polypeptide reads, in one-letter code: UDP-3-O-acylglucosamine N-acyltransferase (361 aa).

Histidine 253 serves as the catalytic Proton acceptor.

The protein belongs to the transferase hexapeptide repeat family. LpxD subfamily. As to quaternary structure, homotrimer.

The enzyme catalyses a UDP-3-O-[(3R)-3-hydroxyacyl]-alpha-D-glucosamine + a (3R)-hydroxyacyl-[ACP] = a UDP-2-N,3-O-bis[(3R)-3-hydroxyacyl]-alpha-D-glucosamine + holo-[ACP] + H(+). It functions in the pathway bacterial outer membrane biogenesis; LPS lipid A biosynthesis. Catalyzes the N-acylation of UDP-3-O-acylglucosamine using 3-hydroxyacyl-ACP as the acyl donor. Is involved in the biosynthesis of lipid A, a phosphorylated glycolipid that anchors the lipopolysaccharide to the outer membrane of the cell. This chain is UDP-3-O-acylglucosamine N-acyltransferase, found in Burkholderia mallei (strain ATCC 23344).